A 225-amino-acid polypeptide reads, in one-letter code: NAD(P)H-quinone oxidoreductase subunit K, chloroplastic (225 aa).

The [4Fe-4S] cluster site is built by C43, C44, C108, and C139.

Belongs to the complex I 20 kDa subunit family. As to quaternary structure, NDH is composed of at least 16 different subunits, 5 of which are encoded in the nucleus. Requires [4Fe-4S] cluster as cofactor.

Its subcellular location is the plastid. The protein localises to the chloroplast thylakoid membrane. It catalyses the reaction a plastoquinone + NADH + (n+1) H(+)(in) = a plastoquinol + NAD(+) + n H(+)(out). The catalysed reaction is a plastoquinone + NADPH + (n+1) H(+)(in) = a plastoquinol + NADP(+) + n H(+)(out). NDH shuttles electrons from NAD(P)H:plastoquinone, via FMN and iron-sulfur (Fe-S) centers, to quinones in the photosynthetic chain and possibly in a chloroplast respiratory chain. The immediate electron acceptor for the enzyme in this species is believed to be plastoquinone. Couples the redox reaction to proton translocation, and thus conserves the redox energy in a proton gradient. This is NAD(P)H-quinone oxidoreductase subunit K, chloroplastic from Barbarea verna (Land cress).